The following is a 300-amino-acid chain: MTTVGFDVPARLGTLLTAMVTPFDADGSVDTAAATRLANRLVDAGCDGLVLSGTTGESPTTTDDEKLQLLRVVLEAVGDRARVIAGAGSYDTAHSVRLVKACAGEGAHGLLVVTPYYSKPPQTGLFAHFTAVADATELPVLLYDIPGRSVVPIEPDTIRALASHPNIVGVKEAKADLYSGARIMADTGLAYYSGDDALNLPWLAVGAIGFISVISHLAAGQLRELLSAFGSGDITTARKINVAIGPLCSAMDRLGGVTMSKAGLRLQGIDVGDPRLPQMPATAEQIDELAVDMRAASVLR.

Threonine 55 contacts pyruvate. Tyrosine 143 acts as the Proton donor/acceptor in catalysis. Lysine 171 (schiff-base intermediate with substrate) is an active-site residue. Isoleucine 211 is a binding site for pyruvate.

The protein belongs to the DapA family. Homotetramer; dimer of dimers.

It is found in the cytoplasm. The enzyme catalyses L-aspartate 4-semialdehyde + pyruvate = (2S,4S)-4-hydroxy-2,3,4,5-tetrahydrodipicolinate + H2O + H(+). It functions in the pathway amino-acid biosynthesis; L-lysine biosynthesis via DAP pathway; (S)-tetrahydrodipicolinate from L-aspartate: step 3/4. In terms of biological role, catalyzes the condensation of (S)-aspartate-beta-semialdehyde [(S)-ASA] and pyruvate to 4-hydroxy-tetrahydrodipicolinate (HTPA). This Mycobacterium leprae (strain Br4923) protein is 4-hydroxy-tetrahydrodipicolinate synthase.